Consider the following 613-residue polypeptide: Phosphomethylpyrimidine synthase (613 aa).

Residues N215, M244, Y273, H309, 329–331 (SRG), 370–373 (DGLR), and E409 each bind substrate. H413 serves as a coordination point for Zn(2+). Y436 lines the substrate pocket. H477 contacts Zn(2+). Positions 557, 560, and 565 each coordinate [4Fe-4S] cluster.

This sequence belongs to the ThiC family. Homodimer. Requires [4Fe-4S] cluster as cofactor.

The enzyme catalyses 5-amino-1-(5-phospho-beta-D-ribosyl)imidazole + S-adenosyl-L-methionine = 4-amino-2-methyl-5-(phosphooxymethyl)pyrimidine + CO + 5'-deoxyadenosine + formate + L-methionine + 3 H(+). The protein operates within cofactor biosynthesis; thiamine diphosphate biosynthesis. Catalyzes the synthesis of the hydroxymethylpyrimidine phosphate (HMP-P) moiety of thiamine from aminoimidazole ribotide (AIR) in a radical S-adenosyl-L-methionine (SAM)-dependent reaction. This Paramagnetospirillum magneticum (strain ATCC 700264 / AMB-1) (Magnetospirillum magneticum) protein is Phosphomethylpyrimidine synthase.